Reading from the N-terminus, the 554-residue chain is Chaperonin GroEL (554 aa).

Residues 30–33, Lys-51, 87–91, Gly-416, and Asp-503 each bind ATP; these read TLGP and DGTTT.

Belongs to the chaperonin (HSP60) family. Forms a cylinder of 14 subunits composed of two heptameric rings stacked back-to-back. Interacts with the co-chaperonin GroES.

The protein resides in the cytoplasm. It carries out the reaction ATP + H2O + a folded polypeptide = ADP + phosphate + an unfolded polypeptide.. In terms of biological role, together with its co-chaperonin GroES, plays an essential role in assisting protein folding. The GroEL-GroES system forms a nano-cage that allows encapsulation of the non-native substrate proteins and provides a physical environment optimized to promote and accelerate protein folding. This is Chaperonin GroEL from Holospora obtusa.